A 360-amino-acid polypeptide reads, in one-letter code: Peptide chain release factor 1 (360 aa).

Glutamine 235 is modified (N5-methylglutamine). A compositionally biased stretch (basic and acidic residues) spans arginine 285 to arginine 295. Residues arginine 285–threonine 309 form a disordered region.

Belongs to the prokaryotic/mitochondrial release factor family. Methylated by PrmC. Methylation increases the termination efficiency of RF1.

It is found in the cytoplasm. Its function is as follows. Peptide chain release factor 1 directs the termination of translation in response to the peptide chain termination codons UAG and UAA. The polypeptide is Peptide chain release factor 1 (Haemophilus influenzae (strain 86-028NP)).